The sequence spans 368 residues: MAAYAAFKHVELYNVGKAKKRVLRPPGGGSSDIFGADMPATPRTVKNRMISNIFSADKDGAIKNNVRQGAHRFYFIGETPRRGQKSVDSHSRLFGEPSRPITPGKNHMKSSIPFGQNSEAAAAQKLLTNGNTNSTTNGHYNGKSGSVSSASSSVSSSTENLKINSGSRSVFRNMSTAAGADKMNKMDDPDCASLISQGNSGFADPVAQGGDTASIDMPCKSNDVGSLHGDNQSHTESGRYGYSSQSRRTAGTSPLNPYSLDKINSASAAFKEPLGPCSDYIKDPQHVPCIKIHAKDEHRNPITGLGLNGDGVGGLKPKKMKIREGNPVTGEGYKSGGSDSAQTPTMNGANQVINKNRVPPGGYSSGLW.

Residue Ser30 is modified to Phosphoserine. Thr41 carries the post-translational modification Phosphothreonine. The span at 81–93 shows a compositional bias: basic and acidic residues; it reads RRGQKSVDSHSRL. The interval 81-106 is disordered; the sequence is RRGQKSVDSHSRLFGEPSRPITPGKN. A Phosphothreonine modification is found at Thr102. Residues Ser111, Ser146, and Ser157 each carry the phosphoserine modification. 2 stretches are compositionally biased toward low complexity: residues 129–157 and 238–248; these read NGNTNSTTNGHYNGKSGSVSSASSSVSSS and GRYGYSSQSRR. 3 disordered regions span residues 129 to 164, 196 to 256, and 316 to 368; these read NGNTNSTTNGHYNGKSGSVSSASSSVSSSTENLKIN, SQGN…SPLN, and KPKK…SGLW. Residues 337–354 are compositionally biased toward polar residues; that stretch reads GSDSAQTPTMNGANQVIN.

This sequence belongs to the MAP Jupiter family.

The protein localises to the nucleus. It is found in the cytoplasm. It localises to the cytoskeleton. The protein resides in the spindle. In terms of biological role, binds to all microtubule populations. The polypeptide is Microtubule-associated protein Jupiter (Drosophila willistoni (Fruit fly)).